The primary structure comprises 936 residues: Protocadherin gamma-A10 (936 aa).

A signal peptide spans 1 to 32 (MAAQRNRSKESKDCSGLVLLCLFFGIPWEAGA). Cadherin domains follow at residues 33 to 137 (RQIS…APTF), 138 to 246 (QAEN…APVF), 247 to 351 (TLPE…SPEL), 352 to 456 (TITS…PPTF), 457 to 566 (SQVS…APEI), and 574 to 687 (DGST…SPAN). Topologically, residues 33-696 (RQISYSIPEE…NSETSDLTLY (664 aa)) are extracellular. N-linked (GlcNAc...) asparagine glycosylation occurs at Asn51. Asn423 and Asn549 each carry an N-linked (GlcNAc...) asparagine glycan. The helical transmembrane segment at 697-717 (LVVAVAAVSCVFLAFVIVLLA) threads the bilayer. Topologically, residues 718–936 (LRLRRWHKSR…KKKSGKKEKK (219 aa)) are cytoplasmic. 2 disordered regions span residues 801 to 845 (SKFP…WPNN) and 906 to 936 (ATLTNAAGKRDGKAPAGGNGNKKKSGKKEKK). A compositionally biased stretch (polar residues) spans 820–845 (WRFSQAQRPGTSGSQNGDDTGTWPNN). Residues 926–936 (NKKKSGKKEKK) show a composition bias toward basic residues.

It localises to the cell membrane. Functionally, potential calcium-dependent cell-adhesion protein. May be involved in the establishment and maintenance of specific neuronal connections in the brain. The sequence is that of Protocadherin gamma-A10 (PCDHGA10) from Pan troglodytes (Chimpanzee).